The following is an 876-amino-acid chain: Alanine--tRNA ligase (876 aa).

N6-acetyllysine is present on Lys-74. Positions 564, 568, 666, and 670 each coordinate Zn(2+).

Belongs to the class-II aminoacyl-tRNA synthetase family. In terms of assembly, homotetramer. Requires Zn(2+) as cofactor.

It localises to the cytoplasm. The catalysed reaction is tRNA(Ala) + L-alanine + ATP = L-alanyl-tRNA(Ala) + AMP + diphosphate. Its function is as follows. Catalyzes the attachment of alanine to tRNA(Ala) in a two-step reaction: alanine is first activated by ATP to form Ala-AMP and then transferred to the acceptor end of tRNA(Ala). Also edits incorrectly charged Ser-tRNA(Ala) and Gly-tRNA(Ala) via its editing domain. The chain is Alanine--tRNA ligase from Escherichia coli O1:K1 / APEC.